The chain runs to 353 residues: MRKAFTRIRLRNNRYAAYIIGFSFLAVSIILGISCGSLHIPIPAVFRVFWHQGFGGSIGSDDPMYTNIMMNIRLPRVVLAALVGAALSIAGAAFQGLLKNPLADPYTLGVSSGASVGAVVTLFLGLHLPVIGGFTLPVLSVAAALATMAAVLFFSRLVHASMSVSTLILTGVITNSFLGAFISLIIALTGDNLLPIVHWLLGSVSMRGWSYVILFLPFFLLGTILLIINGRELNVMTYGEDKAKLLGVSVQQRKMMILIAGSLLTGSAVAVSGTIGFVGLVIPHITRLLWGTDHRHLLPLSALLGAGFLVLADLLSRTIIEPIELPIGIITSLAGAPVFALILIRQHRGGRSL.

9 consecutive transmembrane segments (helical) span residues 16 to 36 (AAYI…ISCG), 77 to 97 (VVLA…FQGL), 106 to 128 (YTLG…GLHL), 140 to 160 (SVAA…LVHA), 167 to 187 (LILT…LIIA), 208 to 228 (GWSY…LLII), 263 to 283 (LLTG…LVIP), 296 to 316 (HLLP…DLLS), and 323 to 343 (IELP…ALIL).

Belongs to the binding-protein-dependent transport system permease family. FecCD subfamily. In terms of assembly, the complex is composed of two ATP-binding proteins (YvrA), two transmembrane proteins (YvrB) and a solute-binding protein (YvrC).

It is found in the cell membrane. Functionally, probably part of an ABC transporter complex. Probably responsible for the translocation of the substrate across the membrane. This is an uncharacterized protein from Bacillus subtilis (strain 168).